The sequence spans 91 residues: Small ribosomal subunit protein uS19 (91 aa).

It belongs to the universal ribosomal protein uS19 family.

In terms of biological role, protein S19 forms a complex with S13 that binds strongly to the 16S ribosomal RNA. The protein is Small ribosomal subunit protein uS19 of Saccharophagus degradans (strain 2-40 / ATCC 43961 / DSM 17024).